The following is a 146-amino-acid chain: 3-hydroxyacyl-[acyl-carrier-protein] dehydratase FabZ (146 aa).

H49 is an active-site residue.

The protein belongs to the thioester dehydratase family. FabZ subfamily.

Its subcellular location is the cytoplasm. It catalyses the reaction a (3R)-hydroxyacyl-[ACP] = a (2E)-enoyl-[ACP] + H2O. Functionally, involved in unsaturated fatty acids biosynthesis. Catalyzes the dehydration of short chain beta-hydroxyacyl-ACPs and long chain saturated and unsaturated beta-hydroxyacyl-ACPs. The sequence is that of 3-hydroxyacyl-[acyl-carrier-protein] dehydratase FabZ from Pseudomonas fluorescens (strain Pf0-1).